Consider the following 124-residue polypeptide: MATVNQLVRKPRKRKVAKSDVPALQACPQRRGVCTRVYTTTPKKPNSALRKVCRVRLTNGFEVTSYIGGEGHNLQEHSVVLIRGGRVKDLPGVRYHTVRGSLDTSGVQNRKQGRSKYGTKRPKK.

Positions 1–22 (MATVNQLVRKPRKRKVAKSDVP) are disordered. Aspartate 89 is subject to 3-methylthioaspartic acid. A disordered region spans residues 99-124 (RGSLDTSGVQNRKQGRSKYGTKRPKK). Over residues 111–124 (KQGRSKYGTKRPKK) the composition is skewed to basic residues.

Belongs to the universal ribosomal protein uS12 family. As to quaternary structure, part of the 30S ribosomal subunit. Contacts proteins S8 and S17. May interact with IF1 in the 30S initiation complex.

With S4 and S5 plays an important role in translational accuracy. Its function is as follows. Interacts with and stabilizes bases of the 16S rRNA that are involved in tRNA selection in the A site and with the mRNA backbone. Located at the interface of the 30S and 50S subunits, it traverses the body of the 30S subunit contacting proteins on the other side and probably holding the rRNA structure together. The combined cluster of proteins S8, S12 and S17 appears to hold together the shoulder and platform of the 30S subunit. In Marinomonas sp. (strain MWYL1), this protein is Small ribosomal subunit protein uS12.